We begin with the raw amino-acid sequence, 321 residues long: uncharacterized protein (321 aa).

Residues 1-12 (MQGGREVGRESV) are compositionally biased toward basic and acidic residues. Positions 1-85 (MQGGREVGRE…GWGEFEGFQE (85 aa)) are disordered. Over residues 53-67 (NANSSRLDEGLSSSR) the composition is skewed to polar residues.

This is an uncharacterized protein from Rattus norvegicus (Rat).